The sequence spans 440 residues: APO protein 2, chloroplastic (440 aa).

The transit peptide at 1–62 (MSITYSAISF…SLQLNSRVVL (62 aa)) directs the protein to the chloroplast. The segment covering 106–115 (ARERVKNNKD) has biased composition (basic and acidic residues). A disordered region spans residues 106–126 (ARERVKNNKDKPKRPLPPPKN). APO domains follow at residues 162–247 (ACGW…EIPE) and 332–417 (VCGY…VVPE).

The protein belongs to the APO family.

Its subcellular location is the plastid. The protein resides in the chloroplast. Functionally, may be involved in the stable assembly of several 4Fe-4S cluster-containing complexes of chloroplasts. The chain is APO protein 2, chloroplastic (APO2) from Arabidopsis thaliana (Mouse-ear cress).